Reading from the N-terminus, the 315-residue chain is HTH-type transcriptional regulator TreR (315 aa).

The 55-residue stretch at 5 to 59 folds into the HTH lacI-type domain; it reads LTIKDIARLSGVGKSTVSRVLNNESGVSQLTRERVEAVMNQHGFSPSRSARAMRG. The H-T-H motif DNA-binding region spans 7-26; that stretch reads IKDIARLSGVGKSTVSRVLN. Alpha,alpha-trehalose 6-phosphate contacts are provided by residues 71–77, Gly-126, Arg-147, 187–190, Arg-194, Thr-242, and Tyr-284; these read RLDSLSE and DVTT.

As to quaternary structure, homodimer.

Repressor of the treBC operon. It is able to bind trehalose-6-phosphate and trehalose. This Escherichia coli (strain K12) protein is HTH-type transcriptional regulator TreR (treR).